Here is a 307-residue protein sequence, read N- to C-terminus: Metapyrocatechase (307 aa).

2 VOC domains span residues 7–122 (RPGH…LYAD) and 150–269 (RFDH…VFCG). Positions 153, 214, and 265 each coordinate Fe cation.

This sequence belongs to the extradiol ring-cleavage dioxygenase family. In terms of assembly, homotetramer. Fe(2+) serves as cofactor.

It carries out the reaction catechol + O2 = (2Z,4E)-2-hydroxy-6-oxohexa-2,4-dienoate + H(+). It functions in the pathway aromatic compound metabolism; benzoate degradation via hydroxylation. The polypeptide is Metapyrocatechase (dmpB) (Pseudomonas sp. (strain CF600)).